A 610-amino-acid polypeptide reads, in one-letter code: Elongation factor 4 (610 aa).

The tr-type G domain maps to 11–193 (EKIRNFSIIA…QIVEKVPAPS (183 aa)). Residues 23–28 (DHGKST) and 140–143 (NKID) contribute to the GTP site.

The protein belongs to the TRAFAC class translation factor GTPase superfamily. Classic translation factor GTPase family. LepA subfamily.

It is found in the cell membrane. The catalysed reaction is GTP + H2O = GDP + phosphate + H(+). Required for accurate and efficient protein synthesis under certain stress conditions. May act as a fidelity factor of the translation reaction, by catalyzing a one-codon backward translocation of tRNAs on improperly translocated ribosomes. Back-translocation proceeds from a post-translocation (POST) complex to a pre-translocation (PRE) complex, thus giving elongation factor G a second chance to translocate the tRNAs correctly. Binds to ribosomes in a GTP-dependent manner. This chain is Elongation factor 4, found in Streptococcus uberis (strain ATCC BAA-854 / 0140J).